The following is a 436-amino-acid chain: UPF0229 protein mll9637 (436 aa).

The interval 54 to 103 (IPRKGTGEPTFGDDKESGRRQHILPGNRTFSSGDLIPKPGGGGGYGSAAG) is disordered.

The protein belongs to the UPF0229 family.

The protein is UPF0229 protein mll9637 of Mesorhizobium japonicum (strain LMG 29417 / CECT 9101 / MAFF 303099) (Mesorhizobium loti (strain MAFF 303099)).